The chain runs to 1012 residues: ATP-dependent DNA helicase MPH1 (1012 aa).

The Helicase ATP-binding domain occupies 94-261 (IVQKSLYQNT…EVVNNLNISN (168 aa)). 107–114 (IPTGMGKT) serves as a coordination point for ATP. Positions 209 to 212 (DEAH) match the DEAH box motif. A Helicase C-terminal domain is found at 430-654 (KLQKIINELS…NFVEYKKSDR (225 aa)). Residues 493 to 555 (DEGFIRKNKP…AQISGMNQKQ (63 aa)) form a disordered region. Basic residues predominate over residues 498–510 (RKNKPKGRKKADR). Basic and acidic residues predominate over residues 511 to 537 (LKRLEEDKQKQLSKAKQKEQEKVERSS).

Belongs to the DEAD box helicase family. DEAH subfamily. FANCM sub-subfamily. Interacts with the MHF histone-fold complex to form the FANCM-MHF complex.

It localises to the nucleus. It catalyses the reaction ATP + H2O = ADP + phosphate + H(+). Its function is as follows. ATP-dependent DNA helicase involved in DNA damage repair by homologous recombination and in genome maintenance. Capable of unwinding D-loops. Plays a role in limiting crossover recombinants during mitotic DNA double-strand break (DSB) repair. Component of a FANCM-MHF complex which promotes gene conversion at blocked replication forks, probably by reversal of the stalled fork. The chain is ATP-dependent DNA helicase MPH1 from Vanderwaltozyma polyspora (strain ATCC 22028 / DSM 70294 / BCRC 21397 / CBS 2163 / NBRC 10782 / NRRL Y-8283 / UCD 57-17) (Kluyveromyces polysporus).